Consider the following 277-residue polypeptide: Energy-coupling factor transporter transmembrane protein EcfT (277 aa).

Transmembrane regions (helical) follow at residues 39–59 (ITIL…YAII), 61–81 (FFCF…WNGV), 85–105 (IGLI…GHVF), 121–141 (AIYI…MTVT), 163–183 (VPVD…PTLF), and 254–274 (SKYD…LLIF).

This sequence belongs to the energy-coupling factor EcfT family. As to quaternary structure, forms a stable energy-coupling factor (ECF) transporter complex composed of 2 membrane-embedded substrate-binding proteins (S component), 2 ATP-binding proteins (A component) and 2 transmembrane proteins (T component). May be able to interact with more than 1 S component at a time.

The protein resides in the cell membrane. In terms of biological role, transmembrane (T) component of an energy-coupling factor (ECF) ABC-transporter complex. Unlike classic ABC transporters this ECF transporter provides the energy necessary to transport a number of different substrates. This is Energy-coupling factor transporter transmembrane protein EcfT from Lactobacillus helveticus (strain DPC 4571).